The following is a 95-amino-acid chain: Co-chaperonin GroES (95 aa).

It belongs to the GroES chaperonin family. As to quaternary structure, heptamer of 7 subunits arranged in a ring. Interacts with the chaperonin GroEL.

It localises to the cytoplasm. Together with the chaperonin GroEL, plays an essential role in assisting protein folding. The GroEL-GroES system forms a nano-cage that allows encapsulation of the non-native substrate proteins and provides a physical environment optimized to promote and accelerate protein folding. GroES binds to the apical surface of the GroEL ring, thereby capping the opening of the GroEL channel. The protein is Co-chaperonin GroES of Vesicomyosocius okutanii subsp. Calyptogena okutanii (strain HA).